Consider the following 317-residue polypeptide: L-lactate dehydrogenase (317 aa).

Residues valine 17, aspartate 38, lysine 43, tyrosine 69, and 83–84 (GA) contribute to the NAD(+) site. Positions 86 and 92 each coordinate substrate. Residues serine 105, 122–124 (ATN), and serine 147 contribute to the NAD(+) site. Residue 124–127 (NPVD) participates in substrate binding. Residue 152 to 155 (DTAR) coordinates substrate. Residues arginine 157 and histidine 172 each coordinate beta-D-fructose 1,6-bisphosphate. Residue histidine 179 is the Proton acceptor of the active site. Tyrosine 224 is modified (phosphotyrosine). Position 233 (threonine 233) interacts with substrate.

This sequence belongs to the LDH/MDH superfamily. LDH family. As to quaternary structure, homotetramer.

The protein resides in the cytoplasm. The enzyme catalyses (S)-lactate + NAD(+) = pyruvate + NADH + H(+). The protein operates within fermentation; pyruvate fermentation to lactate; (S)-lactate from pyruvate: step 1/1. Its activity is regulated as follows. Allosterically activated by fructose 1,6-bisphosphate (FBP). In terms of biological role, catalyzes the conversion of lactate to pyruvate. The sequence is that of L-lactate dehydrogenase from Geobacillus kaustophilus (strain HTA426).